A 7081-amino-acid polypeptide reads, in one-letter code: Leucine-rich repeat transmembrane protein CCDC168 (7081 aa).

A helical membrane pass occupies residues 37–57 (WVAIFFIILLGIIFEIILMKA). LRR repeat units lie at residues 233–256 (PCPL…VRNQ) and 420–445 (NAEF…SVKA). The tract at residues 717-745 (EDLQSSENSHLQLSNGEELPTSTPKTQRC) is disordered. Over residues 718 to 742 (DLQSSENSHLQLSNGEELPTSTPKT) the composition is skewed to polar residues. Residues 865-890 (ADTLRIIRLSHSASKQEKLPDEKETQ) form an LRR 3 repeat. Residues 943-1009 (QISSGSSKAP…DPKNPLTMPE (67 aa)) are disordered. Polar residues predominate over residues 958–970 (VQPQTLSTQTILE). A compositionally biased stretch (basic and acidic residues) spans 981 to 999 (QVEKVKQSTDRPTDRESAG). The LRR 4 repeat unit spans residues 1050 to 1075 (LPAVALGSFNNHLLTLPYFKRQEIKK). Polar residues-rich tracts occupy residues 1274-1286 (KCTA…SPIS) and 1295-1304 (LNQTRESYIP). Positions 1274 to 1304 (KCTADSETPSPISGKSLIGDPLNQTRESYIP) are disordered. One copy of the LRR 5 repeat lies at 1501–1527 (NCLTLELHINGQRLQHQTGFEQTTLET). Basic and acidic residues-rich tracts occupy residues 1773–1784 (ETEKDTLREKRL) and 1793–1804 (TSPHEDSITSRD). Disordered stretches follow at residues 1773–1804 (ETEK…TSRD), 1954–1973 (KSPH…ESGS), 2008–2031 (STHQ…EGRS), and 2083–2103 (TGKS…NPRR). Positions 1964–1973 (ANLTDMESGS) are enriched in polar residues. The LRR 6 repeat unit spans residues 2373-2397 (KNQINTIQLSERKIILNPKCLTMKE). The disordered stretch occupies residues 2637–2680 (GRHSPASEEMKRQNGRLKMADRSSPQGRPLQAKQSAVSQSPDTA). A compositionally biased stretch (polar residues) spans 2668-2678 (AKQSAVSQSPD). 5 LRR repeats span residues 2727 to 2749 (SKIH…KTRA), 2832 to 2855 (IQQQ…VYDS), 2862 to 2889 (IKKL…KLEK), 3433 to 3458 (LSSR…RLEW), and 3630 to 3653 (ILSL…NVKS). Residues 3730–3756 (SLSHSNSNSRTKAGKDKSGTLKGCLPP) form a disordered region. The LRR 12 repeat unit spans residues 3875–3898 (MRGITRFCLSSSTQQELSDTMEKC). Disordered stretches follow at residues 4119–4260 (ELSH…DGDK), 4293–4428 (QGII…KQET), 4729–4756 (QESL…LLPQ), 4794–4817 (SPLS…QDRT), 4831–4859 (MPSL…RLAN), 4928–4955 (GVQE…YLNC), 4966–4985 (LGKT…SDSG), and 5191–5212 (QKVK…SPLH). Composition is skewed to basic and acidic residues over residues 4121–4133 (SHQK…EKAD), 4147–4176 (KAKD…DKGL), 4192–4245 (EPGK…EQQK), 4329–4361 (QKAK…DLKG), 4375–4401 (EPGK…NRDG), and 4415–4426 (EQEKRDGHKSKQ). Polar residues predominate over residues 4731–4743 (SLPSRQTAPTKPT). Composition is skewed to basic and acidic residues over residues 4746-4756 (LVKKEKQLLPQ) and 4798-4817 (KRKE…QDRT). The segment covering 5203 to 5212 (KSPSRSSPLH) has biased composition (polar residues). One copy of the LRR 13 repeat lies at 5311–5336 (LSQLELDKETHLGNEMLRLKRPILRR). Positions 5467–5496 (LPDTEKTADAEARSGDVRKGKPHRSQKENR) are disordered. Over residues 5469–5496 (DTEKTADAEARSGDVRKGKPHRSQKENR) the composition is skewed to basic and acidic residues. An LRR 14 repeat occupies 5522 to 5545 (LNAKELVLNINKLEKKVHKDKDEA). Disordered regions lie at residues 5564 to 5583 (LDSG…SSCP) and 5763 to 5792 (QQET…SNDR). A compositionally biased stretch (basic and acidic residues) spans 5779–5792 (KFDKPKEDGQSNDR). LRR repeat units follow at residues 5901–5924 (KQAL…LFPP), 6259–6282 (PDLR…ECPS), 6419–6442 (HLES…SLQM), 6552–6575 (HFSV…SYAM), and 6613–6637 (QIDL…TFPK). Disordered regions lie at residues 6859–6878 (CKSH…SPDW) and 6916–6950 (APLT…RSDL). Over residues 6860–6871 (KSHKSRKYRSSS) the composition is skewed to basic residues. The segment covering 6937–6950 (HPESQERKKARSDL) has biased composition (basic and acidic residues). Residues 7012–7036 (NRPFFFACVPADSLEVIPKTIRWTI) form an LRR 20 repeat.

It localises to the membrane. The sequence is that of Leucine-rich repeat transmembrane protein CCDC168 from Homo sapiens (Human).